The following is a 323-amino-acid chain: Sphingolipid delta(4)-desaturase DES1 (323 aa).

The N-myristoyl glycine moiety is linked to residue Gly2. A run of 2 helical transmembrane segments spans residues 41-61 (SNLI…FYLV) and 68-88 (WVLF…TLAI). The Histidine box-1 signature appears at 89–93 (HEVSH). The chain crosses the membrane as a helical span at residues 102–122 (AMWNRWFGIFANLPIGVPYSV). The Histidine box-2 motif lies at 128–132 (HMDHH). Helical transmembrane passes span 152–172 (FFCT…FYAF), 184–204 (YLEI…YYVL), and 209–229 (LVYM…SGHF). The short motif at 259-263 (HNEHH) is the Histidine box-3 element. Ser307 is modified (phosphoserine).

It belongs to the fatty acid desaturase type 1 family. DEGS subfamily. Interacts with RLBP1; the interaction increases synthesis of chromophore-precursors by DEGS1. Myristoylation can target the enzyme to the mitochondria leading to an increase in ceramide levels.

It is found in the mitochondrion membrane. The protein localises to the endoplasmic reticulum membrane. The catalysed reaction is an N-acylsphinganine + 2 Fe(II)-[cytochrome b5] + O2 + 2 H(+) = an N-acylsphing-4-enine + 2 Fe(III)-[cytochrome b5] + 2 H2O. It catalyses the reaction all-trans-retinol = 11-cis-retinol. It carries out the reaction all-trans-retinol = 9-cis-retinol. The enzyme catalyses all-trans-retinol = 13-cis-retinol. The catalysed reaction is 11-cis-retinol = 13-cis-retinol. It catalyses the reaction 11-cis-retinol = 9-cis-retinol. Functionally, has sphingolipid-delta-4-desaturase activity. Converts D-erythro-sphinganine to D-erythro-sphingosine (E-sphing-4-enine). Catalyzes the equilibrium isomerization of retinols. The protein is Sphingolipid delta(4)-desaturase DES1 (DEGS1) of Bos taurus (Bovine).